Consider the following 127-residue polypeptide: Large ribosomal subunit protein bL17 (127 aa).

The protein belongs to the bacterial ribosomal protein bL17 family. In terms of assembly, part of the 50S ribosomal subunit. Contacts protein L32.

The chain is Large ribosomal subunit protein bL17 from Salmonella paratyphi A (strain AKU_12601).